Here is a 54-residue protein sequence, read N- to C-terminus: Small ribosomal subunit protein uS14 (54 aa).

Cys-19, Cys-22, Cys-37, and Cys-40 together coordinate Zn(2+).

Belongs to the universal ribosomal protein uS14 family. Zinc-binding uS14 subfamily. In terms of assembly, part of the 30S ribosomal subunit. Zn(2+) serves as cofactor.

Binds 16S rRNA, required for the assembly of 30S particles. The polypeptide is Small ribosomal subunit protein uS14 (Sulfurisphaera tokodaii (strain DSM 16993 / JCM 10545 / NBRC 100140 / 7) (Sulfolobus tokodaii)).